A 606-amino-acid polypeptide reads, in one-letter code: WD repeat-containing protein 1 (606 aa).

WD repeat units follow at residues 4–45, 48–87, 93–135, 138–176, 180–218, 224–263, 270–306, 311–351, 358–408, 432–474, 480–518, 523–561, and 566–604; these read EIKK…LRNI, PAIADIYTEHAHQVVVAKYAPSGFYIASGDISGKLRIWDT, LLKY…LWDT, SVGEITGHNKVINSVDIKQTRPYRLATGSDDNCAAFFEG, KFKFTIGDHSRFVNCVRFSPDGNRFATASADGQIFIYDG, VCALGESKAHDGGIYAISWSPDSTHLLSASGDKTSKIWDV, STFPMGSNVLDQQLGCLWQKDHLLSISLSGYINYLDK, KPLR…YWDS, SFSG…KLDV, LKDQ…VYSI, KDEGKLLEAKGPVTDVAYSHDGAFLAVCDASKVVTVFSV, SENNVFYGHHAKIVCLAWSPDNEHFASGGMDMMVYVWTL, and TKVKIQDAHRLHHVSSLAWLDEHTLVTTSHDASVKEWTI. An N6-acetyllysine mark is found at lysine 28, lysine 81, lysine 95, and lysine 115. At tyrosine 238 the chain carries Phosphotyrosine. Lysine 480 carries the N6-acetyllysine modification.

Belongs to the WD repeat AIP1 family.

It is found in the cytoplasm. The protein resides in the cytoskeleton. It localises to the cell projection. Its subcellular location is the podosome. In terms of biological role, induces disassembly of actin filaments in conjunction with ADF/cofilin family proteins. Enhances cofilin-mediated actin severing. Involved in cytokinesis. Involved in chemotactic cell migration by restricting lamellipodial membrane protrusions. Involved in myocardium sarcomere organization. Required for cardiomyocyte growth at the postnatal and maintenance at the adult stage. Involved in neutrophil actin dynamics and migration. Involved in megakaryocyte maturation and platelet shedding. Required for the establishment of planar cell polarity (PCP) during follicular epithelium development and for cell shape changes during PCP; the function seems to implicate cooperation with CFL1 and/or DSTN/ADF. Involved in the generation/maintenance of cortical tension. Involved in assembly and maintenance of epithelial apical cell junctions and plays a role in the organization of the perijunctional actomyosin belt. This Mus musculus (Mouse) protein is WD repeat-containing protein 1 (Wdr1).